A 367-amino-acid polypeptide reads, in one-letter code: Homoserine O-acetyltransferase (367 aa).

Residues 44 to 350 enclose the AB hydrolase-1 domain; that stretch reads NAIMVTHAWT…AYGHDAFLLE (307 aa). Catalysis depends on Ser-150, which acts as the Nucleophile. Residue Arg-217 participates in substrate binding. Active-site residues include Asp-311 and His-344. A substrate-binding site is contributed by Asp-345.

It belongs to the AB hydrolase superfamily. MetX family. In terms of assembly, homodimer.

The protein localises to the cytoplasm. The catalysed reaction is L-homoserine + acetyl-CoA = O-acetyl-L-homoserine + CoA. It functions in the pathway amino-acid biosynthesis; L-methionine biosynthesis via de novo pathway; O-acetyl-L-homoserine from L-homoserine: step 1/1. Its function is as follows. Transfers an acetyl group from acetyl-CoA to L-homoserine, forming acetyl-L-homoserine. The polypeptide is Homoserine O-acetyltransferase (Geotalea daltonii (strain DSM 22248 / JCM 15807 / FRC-32) (Geobacter daltonii)).